The primary structure comprises 769 residues: MDIGKKHVIPKSQYRRKRREFFHNEDREENLNQHQDKQNIDNTTSKKADKQIHKDSIDKHERFKNSLSSHLEQRNRDVNENKAEESKSNQDSKSAYNRDHYLTDDVSKKQNSLDSVDQDTEKSKYYEQNSEATLSTKSTDKVESTEMRKLSSDKNKVGHEEQHVLSKPSEHDKETRIDSESSRTDSDSSMQTEKIKKDSSDGNKSSNLKSEVISDKSNTVPKLSESDDEVNNQKPLTLPEEQKLKRQQSQNEQTKTYTYGDSEQNDKSNHENDLSHHTPSISDDKDNVMRENHIVDDNPDNDINTLSLSKIDDDRKLDEKIHVEDKHKQNADSSETVGYQSQSTASHRSTEKRNISINDHDKLNGQKTNTKTSANNNQKKATSKLNKGRATNNNYSDILKKFWMMYWPKLVILMGIIILIVILNAIFNNVNKNDRMNDNNDADAQKYTTTMKNANNTVKSVVTVENETSKDSSLPKDKASQDEVGSGVVYKKSGDTLYIVTNAHVVGDKENQKITFSNNKSVVGKVLGKDKWSDLAVVKATSSDSSVKEIAIGDSNNLVLGEPILVVGNPLGVDFKGTVTEGIISGLNRNVPIDFDKDNKYDMLMKAFQIDASVNPGNSGGAVVNREGKLIGVVAAKISMPNVENMSFAIPVNEVQKIVKDLETKGKIDYPDVGVKMKNIASLNSFERQAVKLPGKVKNGVVVDQVDNNGLADQSGLKKGDVITELDGKLLEDDLRFRQIIFSHKDDLKSITAKIYRDGKEKEINIKLK.

The segment covering 1–20 has biased composition (basic residues); that stretch reads MDIGKKHVIPKSQYRRKRRE. Disordered regions lie at residues 1 to 287 and 324 to 390; these read MDIG…DKDN and EDKH…KGRA. Basic and acidic residues-rich tracts occupy residues 21-64 and 71-108; these read FFHN…ERFK and LEQR…DVSK. Polar residues predominate over residues 126 to 137; it reads YEQNSEATLSTK. The segment covering 138-186 has biased composition (basic and acidic residues); that stretch reads STDKVESTEMRKLSSDKNKVGHEEQHVLSKPSEHDKETRIDSESSRTDS. The segment covering 247–262 has biased composition (polar residues); that stretch reads QQSQNEQTKTYTYGDS. The segment covering 264–287 has biased composition (basic and acidic residues); that stretch reads QNDKSNHENDLSHHTPSISDDKDN. Polar residues predominate over residues 331 to 347; that stretch reads ADSSETVGYQSQSTASH. Basic and acidic residues predominate over residues 348 to 364; that stretch reads RSTEKRNISINDHDKLN. Polar residues predominate over residues 365-390; sequence GQKTNTKTSANNNQKKATSKLNKGRA. The helical transmembrane segment at 410 to 430 threads the bilayer; the sequence is LVILMGIIILIVILNAIFNNV. Residues His504, Asp534, and Ser619 each act as charge relay system in the active site. In terms of domain architecture, PDZ spans 680–733; that stretch reads IASLNSFERQAVKLPGKVKNGVVVDQVDNNGLADQSGLKKGDVITELDGKLLED.

Belongs to the peptidase S1C family.

The protein localises to the cell membrane. The sequence is that of Serine protease HtrA-like from Staphylococcus aureus (strain N315).